We begin with the raw amino-acid sequence, 262 residues long: MGLEARHCCMFLLVFASLSVEIRADCSKDCASCALHLGQQREINSLACTLECEGKLPSAKAWGTCKELLLLTKVDNVQDGEKYQDNNDSHYAAKKYGGFMKRYGGFMKKMDELYHAEPEEDDAGGEILAKNYGGFMKKEYDSDRDAADLLRELLATSGDPESSIYHDNNSETPGEINKRYGGFMRGYRRSTDLEDETSGIQKRYGGFMRRVGRPEWWEDYQKRYGGFMTRFTDSFLPSDEDGESYSKENPDMEKRYGGFMRF.

Residues 1–24 (MGLEARHCCMFLLVFASLSVEIRA) form the signal peptide. 3 cysteine pairs are disulfide-bonded: Cys-26–Cys-48, Cys-30–Cys-52, and Cys-33–Cys-65. 5 propeptides span residues 110-131 (MDEL…LAKN), 139-177 (EYDS…GEIN), 190-201 (STDLEDETSGIQ), 211-221 (VGRPEWWEDYQ), and 229-253 (TRFT…PDME).

This sequence belongs to the opioid neuropeptide precursor family. Post-translationally, the N-terminal domain contains 6 conserved cysteines thought to be involved in disulfide bonding and/or processing.

The protein resides in the secreted. Its function is as follows. Enkephalin neuropeptides compete with and mimic the effects of opiate drugs. They play a role in a number of physiologic functions, including pain perception and responses to stress. This Xenopus laevis (African clawed frog) protein is Proenkephalin-A-A (penk-a).